A 914-amino-acid chain; its full sequence is UPF0182 protein PTH_1387 (914 aa).

The next 7 helical transmembrane spans lie at 7–27 (FAAYVLAGFGLIFLALTIAGA), 48–68 (IIISDLGLRLAVGLTFFVLLF), 109–129 (LLLLAFIALSALMAFLFNFTV), 173–193 (INWVILVSAFWVLAAYFVVYF), 209–229 (YHFSFLAAIFFGLKAAGYQLE), 252–272 (TLLAYKVLTYIALLCALAILI), and 281–301 (LVIYSIGVLLIASVLLGGIYP).

It belongs to the UPF0182 family.

The protein localises to the cell membrane. In Pelotomaculum thermopropionicum (strain DSM 13744 / JCM 10971 / SI), this protein is UPF0182 protein PTH_1387.